Here is a 99-residue protein sequence, read N- to C-terminus: Protein translation factor SUI1 homolog (99 aa).

It belongs to the SUI1 family.

In Picrophilus torridus (strain ATCC 700027 / DSM 9790 / JCM 10055 / NBRC 100828 / KAW 2/3), this protein is Protein translation factor SUI1 homolog.